A 200-amino-acid chain; its full sequence is Recombination protein RecR (200 aa).

Residues 60-75 (CVYCQALTEDDVCNIC) form a C4-type zinc finger. The Toprim domain occupies 83–177 (TKLCIIESML…KISRIGFGVP (95 aa)).

This sequence belongs to the RecR family.

May play a role in DNA repair. It seems to be involved in an RecBC-independent recombinational process of DNA repair. It may act with RecF and RecO. The polypeptide is Recombination protein RecR (Francisella tularensis subsp. tularensis (strain SCHU S4 / Schu 4)).